We begin with the raw amino-acid sequence, 451 residues long: Probable glycine dehydrogenase (decarboxylating) subunit 1 (451 aa).

This sequence belongs to the GcvP family. N-terminal subunit subfamily. The glycine cleavage system is composed of four proteins: P, T, L and H. In this organism, the P 'protein' is a heterodimer of two subunits.

The enzyme catalyses N(6)-[(R)-lipoyl]-L-lysyl-[glycine-cleavage complex H protein] + glycine + H(+) = N(6)-[(R)-S(8)-aminomethyldihydrolipoyl]-L-lysyl-[glycine-cleavage complex H protein] + CO2. Functionally, the glycine cleavage system catalyzes the degradation of glycine. The P protein binds the alpha-amino group of glycine through its pyridoxal phosphate cofactor; CO(2) is released and the remaining methylamine moiety is then transferred to the lipoamide cofactor of the H protein. The polypeptide is Probable glycine dehydrogenase (decarboxylating) subunit 1 (Staphylococcus aureus (strain MSSA476)).